Here is a 152-residue protein sequence, read N- to C-terminus: UPF0266 membrane protein YobD (152 aa).

Transmembrane regions (helical) follow at residues 6–26 (LVLI…QFIM), 45–65 (IDSV…VTNH), and 67–87 (ALIT…IFWI).

Belongs to the UPF0266 family.

Its subcellular location is the cell inner membrane. The chain is UPF0266 membrane protein YobD from Shigella boydii serotype 18 (strain CDC 3083-94 / BS512).